We begin with the raw amino-acid sequence, 355 residues long: tRNA uridine(34) hydroxylase (355 aa).

In terms of domain architecture, Rhodanese spans 146–240 (DDPDTVFVDM…YARQAKAQGL (95 aa)). Cys-200 serves as the catalytic Cysteine persulfide intermediate.

The protein belongs to the TrhO family.

It carries out the reaction uridine(34) in tRNA + AH2 + O2 = 5-hydroxyuridine(34) in tRNA + A + H2O. Functionally, catalyzes oxygen-dependent 5-hydroxyuridine (ho5U) modification at position 34 in tRNAs. The polypeptide is tRNA uridine(34) hydroxylase (Pectobacterium carotovorum subsp. carotovorum (strain PC1)).